A 308-amino-acid chain; its full sequence is Tyrosine recombinase XerD (308 aa).

The Core-binding (CB) domain maps to Pro13–Leu97. Residues Arg118–Ala302 enclose the Tyr recombinase domain. Active-site residues include Arg158, Lys183, His254, Arg257, and His280. Tyr289 acts as the O-(3'-phospho-DNA)-tyrosine intermediate in catalysis.

The protein belongs to the 'phage' integrase family. XerD subfamily. Forms a cyclic heterotetrameric complex composed of two molecules of XerC and two molecules of XerD.

Its subcellular location is the cytoplasm. Site-specific tyrosine recombinase, which acts by catalyzing the cutting and rejoining of the recombining DNA molecules. The XerC-XerD complex is essential to convert dimers of the bacterial chromosome into monomers to permit their segregation at cell division. It also contributes to the segregational stability of plasmids. This chain is Tyrosine recombinase XerD, found in Ralstonia nicotianae (strain ATCC BAA-1114 / GMI1000) (Ralstonia solanacearum).